Here is a 323-residue protein sequence, read N- to C-terminus: Aldo-keto reductase family 1 member C13 (323 aa).

Residues 20–24 (GFGTY), Asp50, and Tyr55 each bind NAD(+). Residue Tyr55 is the Proton donor of the active site. His117 serves as a coordination point for substrate. Residues 166–167 (SN), Gln190, 216–224 (YGALGTQRY), and 270–280 (QSFKENEMREN) each bind NAD(+).

The protein belongs to the aldo/keto reductase family.

Catalyzes the dehydrogenation of 17-beta-hydroxysteroids. May also exhibit significant activity with a variety of cyclic and alicyclic alcohols. Uses both NAD and NADP, but the activity is much greater with NAD than with NADP. This is Aldo-keto reductase family 1 member C13 (Akr1c13) from Mus musculus (Mouse).